The primary structure comprises 233 residues: Ribonuclease HII (233 aa).

Positions 21–211 constitute an RNase H type-2 domain; it reads KIIAGVDEVG…LDALPQWRHL (191 aa). Positions 27, 28, and 119 each coordinate a divalent metal cation.

It belongs to the RNase HII family. Mn(2+) is required as a cofactor. Requires Mg(2+) as cofactor.

Its subcellular location is the cytoplasm. It carries out the reaction Endonucleolytic cleavage to 5'-phosphomonoester.. Functionally, endonuclease that specifically degrades the RNA of RNA-DNA hybrids. This Streptomyces coelicolor (strain ATCC BAA-471 / A3(2) / M145) protein is Ribonuclease HII (rnhB).